A 361-amino-acid chain; its full sequence is Probable S-adenosylmethionine-dependent methyltransferase At5g38780 (361 aa).

Residues Y19, C64, N69, D106, L107, S135, and F136 each contribute to the S-adenosyl-L-homocysteine site. The Mg(2+) site is built by N174, E260, F262, and N263.

This sequence belongs to the methyltransferase superfamily. Type-7 methyltransferase family. As to quaternary structure, homodimer. It depends on Mg(2+) as a cofactor.

This Arabidopsis thaliana (Mouse-ear cress) protein is Probable S-adenosylmethionine-dependent methyltransferase At5g38780.